The following is a 487-amino-acid chain: Glutamyl-tRNA(Gln) amidotransferase subunit A (487 aa).

Active-site charge relay system residues include K80 and S155. The active-site Acyl-ester intermediate is S179.

The protein belongs to the amidase family. GatA subfamily. Heterotrimer of A, B and C subunits.

It carries out the reaction L-glutamyl-tRNA(Gln) + L-glutamine + ATP + H2O = L-glutaminyl-tRNA(Gln) + L-glutamate + ADP + phosphate + H(+). Allows the formation of correctly charged Gln-tRNA(Gln) through the transamidation of misacylated Glu-tRNA(Gln) in organisms which lack glutaminyl-tRNA synthetase. The reaction takes place in the presence of glutamine and ATP through an activated gamma-phospho-Glu-tRNA(Gln). This is Glutamyl-tRNA(Gln) amidotransferase subunit A from Chloroflexus aurantiacus (strain ATCC 29366 / DSM 635 / J-10-fl).